The primary structure comprises 471 residues: Putative multidrug resistance protein MdtD (471 aa).

The Periplasmic segment spans residues 1 to 11; it reads MTDLPDSTRWQ. The helical transmembrane segment at 12-32 threads the bilayer; sequence LWIVAFGFFMQSLDTTIVNTA. The Cytoplasmic portion of the chain corresponds to 33–48; it reads LPSMAQSLGESPLHMH. A helical membrane pass occupies residues 49–69; the sequence is MVIVSYVLTVAVMLPASGWLA. Residues 70-76 lie on the Periplasmic side of the membrane; the sequence is DKVGVRN. A helical membrane pass occupies residues 77–97; that stretch reads IFFTAIVLFTLGSLFCALSGT. The Cytoplasmic segment spans residues 98–101; sequence LNEL. The chain crosses the membrane as a helical span at residues 102–124; the sequence is LLARALQGVGGAMMVPVGRLTVM. At 125–137 the chain is on the periplasmic side; it reads KIVPREQYMAAMT. Residues 138-158 form a helical membrane-spanning segment; sequence FVTLPGQVGPLLGPALGGLLV. Topologically, residues 159 to 164 are cytoplasmic; the sequence is EYASWH. Residues 165-185 form a helical membrane-spanning segment; sequence WIFLINIPVGIIGAIATLMLM. The Periplasmic segment spans residues 186–196; it reads PNYTMQTRRFD. A helical membrane pass occupies residues 197–217; the sequence is LSGFLLLAVGMAVLTLALDGS. At 218 to 224 the chain is on the cytoplasmic side; sequence KGTGLSP. The helical transmembrane segment at 225 to 245 threads the bilayer; it reads LAIAGLVAVGVVALVLYLLHA. Residues 246-262 are Periplasmic-facing; the sequence is RNNNRALFSLKLFRTRT. The helical transmembrane segment at 263 to 283 threads the bilayer; it reads FSLGLAGSFAGRIGSGMLPFM. The Cytoplasmic portion of the chain corresponds to 284–285; the sequence is TP. Residues 286–306 traverse the membrane as a helical segment; sequence VFLQIGLGFSPFHAGLMMIPM. Residues 307–341 lie on the Periplasmic side of the membrane; that stretch reads VLGSMGMKRIVVQVVNRFGYRRVLVATTLGLSLVT. Residues 342–362 form a helical membrane-spanning segment; that stretch reads LLFMTTALLGWYYVLPFVLFL. Over 363-395 the chain is Cytoplasmic; that stretch reads QGMVNSTRFSSMNTLTLKDLPDNLASSGNSLLS. The helical transmembrane segment at 396-416 threads the bilayer; it reads MIMQLSMSIGVTIAGLLLGLF. The Periplasmic segment spans residues 417–430; that stretch reads GSQHVSVDSGTTQT. The helical transmembrane segment at 431–451 threads the bilayer; the sequence is VFMYTWLSMAFIIALPAFIFA. The Cytoplasmic portion of the chain corresponds to 452–471; the sequence is RVPNDTHQNVAISRRKRSAQ.

This sequence belongs to the major facilitator superfamily. TCR/Tet family.

It is found in the cell inner membrane. The chain is Putative multidrug resistance protein MdtD from Escherichia coli (strain SMS-3-5 / SECEC).